The primary structure comprises 110 residues: Nucleoid-associated protein Sfri_2406 (110 aa).

This sequence belongs to the YbaB/EbfC family. In terms of assembly, homodimer.

It localises to the cytoplasm. It is found in the nucleoid. Its function is as follows. Binds to DNA and alters its conformation. May be involved in regulation of gene expression, nucleoid organization and DNA protection. In Shewanella frigidimarina (strain NCIMB 400), this protein is Nucleoid-associated protein Sfri_2406.